A 330-amino-acid polypeptide reads, in one-letter code: mRNA-capping enzyme (330 aa).

The active-site N6-GMP-lysine intermediate is the Lys-82.

Belongs to the eukaryotic GTase family. Monomer. The cofactor is Mg(2+). Requires Mn(2+) as cofactor.

The enzyme catalyses a 5'-end diphospho-ribonucleoside in mRNA + GTP + H(+) = a 5'-end (5'-triphosphoguanosine)-ribonucleoside in mRNA + diphosphate. Its function is as follows. mRNA capping. Transfers a GMP cap onto the end of mRNA that terminates with a 5'-diphosphate tail. The protein is mRNA-capping enzyme of Chlorella (PBCV-1).